The sequence spans 399 residues: Developmentally-regulated G-protein 2 (399 aa).

Positions 63–288 (GRVALIGFPS…LLARMWDEMG (226 aa)) constitute an OBG-type G domain. GTP-binding positions include 69 to 76 (GFPSVGKS), 115 to 119 (DLPGI), and 246 to 249 (NKID). The 79-residue stretch at 288–366 (GLVRVYSKPQ…EDEDVVQIVK (79 aa)) folds into the TGS domain. A disordered region spans residues 372-399 (EGGRGRFKSHSNAPARIADREKKAPLKQ). Over residues 388–399 (IADREKKAPLKQ) the composition is skewed to basic and acidic residues.

This sequence belongs to the TRAFAC class OBG-HflX-like GTPase superfamily. OBG GTPase family.

Its subcellular location is the cytoplasm. Functionally, binds GDP and GTP, and has low GTPase activity. This Arabidopsis thaliana (Mouse-ear cress) protein is Developmentally-regulated G-protein 2 (DRG2).